The following is a 346-amino-acid chain: Holliday junction branch migration complex subunit RuvB (346 aa).

Residues 1-182 are large ATPase domain (RuvB-L); sequence MSEPARLISP…FGIPVRLTFY (182 aa). ATP contacts are provided by residues Leu-21, Arg-22, Gly-63, Lys-66, Thr-67, Thr-68, 129–131, Arg-172, Tyr-182, and Arg-219; that span reads EDY. Thr-67 contacts Mg(2+). Positions 183-253 are small ATPAse domain (RuvB-S); that stretch reads TVEELELIVR…IADEALTRLL (71 aa). Residues 256–346 are head domain (RuvB-H); the sequence is NVGFDQLDKR…AQFRLFQEDD (91 aa). The DNA site is built by Arg-292, Arg-311, and Arg-316.

Belongs to the RuvB family. Homohexamer. Forms an RuvA(8)-RuvB(12)-Holliday junction (HJ) complex. HJ DNA is sandwiched between 2 RuvA tetramers; dsDNA enters through RuvA and exits via RuvB. An RuvB hexamer assembles on each DNA strand where it exits the tetramer. Each RuvB hexamer is contacted by two RuvA subunits (via domain III) on 2 adjacent RuvB subunits; this complex drives branch migration. In the full resolvosome a probable DNA-RuvA(4)-RuvB(12)-RuvC(2) complex forms which resolves the HJ.

Its subcellular location is the cytoplasm. It catalyses the reaction ATP + H2O = ADP + phosphate + H(+). The RuvA-RuvB-RuvC complex processes Holliday junction (HJ) DNA during genetic recombination and DNA repair, while the RuvA-RuvB complex plays an important role in the rescue of blocked DNA replication forks via replication fork reversal (RFR). RuvA specifically binds to HJ cruciform DNA, conferring on it an open structure. The RuvB hexamer acts as an ATP-dependent pump, pulling dsDNA into and through the RuvAB complex. RuvB forms 2 homohexamers on either side of HJ DNA bound by 1 or 2 RuvA tetramers; 4 subunits per hexamer contact DNA at a time. Coordinated motions by a converter formed by DNA-disengaged RuvB subunits stimulates ATP hydrolysis and nucleotide exchange. Immobilization of the converter enables RuvB to convert the ATP-contained energy into a lever motion, pulling 2 nucleotides of DNA out of the RuvA tetramer per ATP hydrolyzed, thus driving DNA branch migration. The RuvB motors rotate together with the DNA substrate, which together with the progressing nucleotide cycle form the mechanistic basis for DNA recombination by continuous HJ branch migration. Branch migration allows RuvC to scan DNA until it finds its consensus sequence, where it cleaves and resolves cruciform DNA. The protein is Holliday junction branch migration complex subunit RuvB of Rhizobium etli (strain ATCC 51251 / DSM 11541 / JCM 21823 / NBRC 15573 / CFN 42).